Here is a 319-residue protein sequence, read N- to C-terminus: 2,3,4,5-tetrahydropyridine-2,6-dicarboxylate N-succinyltransferase (319 aa).

2 residues coordinate Mg(2+): Asp167 and Glu184. Glu200 (acyl-anhydride intermediate) is an active-site residue. Residues Arg202, Gly217, Ser220, Ala243, 258 to 259, and Lys278 each bind succinyl-CoA; that span reads EA.

Belongs to the type 2 tetrahydrodipicolinate N-succinyltransferase family. In terms of assembly, homotrimer.

It localises to the cytoplasm. The enzyme catalyses (S)-2,3,4,5-tetrahydrodipicolinate + succinyl-CoA + H2O = (S)-2-succinylamino-6-oxoheptanedioate + CoA. It participates in amino-acid biosynthesis; L-lysine biosynthesis via DAP pathway; LL-2,6-diaminopimelate from (S)-tetrahydrodipicolinate (succinylase route): step 1/3. Catalyzes the conversion of the cyclic tetrahydrodipicolinate (THDP) into the acyclic N-succinyl-L-2-amino-6-oxopimelate using succinyl-CoA. This is 2,3,4,5-tetrahydropyridine-2,6-dicarboxylate N-succinyltransferase from Salinispora tropica (strain ATCC BAA-916 / DSM 44818 / JCM 13857 / NBRC 105044 / CNB-440).